The following is a 320-amino-acid chain: Probable L,D-transpeptidase YcfS (320 aa).

The first 23 residues, 1-23 (MMIKTRFSRWLTFFTFAAAVALA), serve as a signal peptide directing secretion. One can recognise a LysM domain in the interval 45–90 (KFHVVENDGGSLEAIAKKYNVGFLALLQANPGVDPYVPRAGSVLTI). A L,D-TPase catalytic domain is found at 102-241 (EGIVINIAEL…VTPGTKVNII (140 aa)). H201 serves as the catalytic Proton donor/acceptor. C217 (nucleophile) is an active-site residue.

It belongs to the YkuD family. As to quaternary structure, interacts with DsbG.

The protein localises to the periplasm. The protein operates within cell wall biogenesis; peptidoglycan biosynthesis. Functionally, responsible, at least in part, for anchoring of the major outer membrane lipoprotein (Lpp, also known as the Braun lipoprotein) to the peptidoglycan via a meso-diaminopimelyl-L-Lys- bond on the terminal residue of Lpp. The sequence is that of Probable L,D-transpeptidase YcfS (ycfS) from Escherichia coli (strain K12).